We begin with the raw amino-acid sequence, 289 residues long: Probable endonuclease 4 (289 aa).

H75, H115, E153, D187, H190, H224, D237, H239, and E269 together coordinate Zn(2+).

It belongs to the AP endonuclease 2 family. It depends on Zn(2+) as a cofactor.

It carries out the reaction Endonucleolytic cleavage to 5'-phosphooligonucleotide end-products.. Functionally, endonuclease IV plays a role in DNA repair. It cleaves phosphodiester bonds at apurinic or apyrimidinic (AP) sites, generating a 3'-hydroxyl group and a 5'-terminal sugar phosphate. The chain is Probable endonuclease 4 from Chlamydia caviae (strain ATCC VR-813 / DSM 19441 / 03DC25 / GPIC) (Chlamydophila caviae).